The chain runs to 535 residues: Suppressor of cytokine signaling 6 (535 aa).

The span at 80-89 (RLSAKQKSKG) shows a compositional bias: basic residues. The disordered stretch occupies residues 80–105 (RLSAKQKSKGKAGTPSGSSADEDTFS). The region spanning 384–491 (WYWGPITRWE…TYPVRLTNPV (108 aa)) is the SH2 domain. The region spanning 486–535 (RLTNPVSRFMQVRSLQYLCRFVIRQYTRIDLIQKLPLPNKMKDYLQEKHY) is the SOCS box domain.

Interacts with RBCK1. Interacts with phosphorylated IRS4. Interacts with KIT (phosphorylated). Interacts with PIM3.

It functions in the pathway protein modification; protein ubiquitination. Its function is as follows. SOCS family proteins form part of a classical negative feedback system that regulates cytokine signal transduction. May be a substrate recognition component of a SCF-like ECS (Elongin BC-CUL2/5-SOCS-box protein) E3 ubiquitin-protein ligase complex which mediates the ubiquitination and subsequent proteasomal degradation of target proteins. Regulates KIT degradation by ubiquitination of the tyrosine-phosphorylated receptor. This is Suppressor of cytokine signaling 6 (SOCS6) from Pongo abelii (Sumatran orangutan).